The primary structure comprises 1140 residues: MSYNYVVTAQKPTAVNGCVTGHFTSAEDINLLIAKNTRLEIYVVTAEGLRPVKEVGMYGKIAVMELFRPKGESKDLLFILTAKYNACILEYKQSGESIDIITRAHGNVQDRIGRPSETGIIGIIDPECRMIGLRLYDGLFKVIPLDRDNKELKAFNIRLEELHVIDVKFLYGCQAPTICFVYQDPQGRHVKTYEVSLREKEFNKGPWKQENVEAEASMVIAVPEPFGGAIIIGQESITYHNGDKYLAIAPPIIKQSTIVCHNRVDPNGSRYLLGDMEGRLFMLLLEKEEQMDGTVTLKDLRVELLGETSIAECLTYLDNGVVFVGSRLGDSQPVKLNVDSNEQGSYVVAMETFTNLGPIVDMCVVDLERQGQGQLVTCSGAFKEGSLRIIRNGIGIHEHASIDLPGIKGLWPLRSDPNRETDDTLVLSFVGQTRVLMLNGEEVEETELMGFVDDQQTFFCGNVAHQQLIQITSASVRLVSQEPKALVSEWKEPRAKNISVASCNSSQVVVAVGRALYYLQIHPQELRQISHTEMEHEVACLDVTPLGDSNGLSPLCAIGLWTDISARILKLPSFELLHKEMLGGEIIPRSILMTTFESSHYLLCALGDGALFYFGLNIETGLLSDRKKVTLGTQPTVLRTFRSLSTTNVFACSDRPTVIYSSNHKLVFSNVNLKEVNYMCPLNSDGYPDSLALANTSTLTIGTMNEIQKLHIRTVPIYESPRKICYQEVSQCFGVLSTRIEVQDTSGGTTALRPSASTQALSSSVSSSKLFSSSAAPHETSFGEEVEVHNLLIIDQHTFEVLHAHQFLQNEYALSLVSCKLGKDPNTYFIVGTAMVYPEEAEPKQGRIVVFQYSGGKLQTVAEKEVKGAVYSMVEFNGKLLASINSTVRLYEWTTEKELRTECNHYNNIMALYLKTKGDFILVGDLMRSVLLLAYKPMEGNFEEIARDFNPNWMSAVEILDDDNFLGAENAFNLFVCQKDSAATTDEERQHLQEVGLFHLGEFVNVFCHGSLVMQNLGETSTPTQGSVLLGTVNGMIGLVTSLSESWYNLLLDMQNRLNKVIKSVGKIEHSFWRSFHTERKTEPATGFIDGDLIESFLDISRPKMQEVVANLQYDDGSGMKREATADDLIKVVEELTRIH.

Residue Ser2 is modified to N-acetylserine. The tract at residues 2-768 (SYNYVVTAQK…QALSSSVSSS (767 aa)) is interaction with CDT1. The interval 13–356 (TAVNGCVTGH…VVAMETFTNL (344 aa)) is WD repeat beta-propeller A. Residues 391-708 (RNGIGIHEHA…LTIGTMNEIQ (318 aa)) are WD repeat beta-propeller B; Interaction with CUL4A. The tract at residues 709-1043 (KLHIRTVPIY…NGMIGLVTSL (335 aa)) is WD repeat beta-propeller C. The tract at residues 771 to 1140 (FSSSAAPHET…KVVEELTRIH (370 aa)) is interaction with CDT1 and CUL4A. The residue at position 1067 (Lys1067) is an N6-acetyllysine. Lys1121 is covalently cross-linked (Glycyl lysine isopeptide (Lys-Gly) (interchain with G-Cter in SUMO2)). Phosphothreonine is present on Thr1125.

The protein belongs to the DDB1 family. In terms of assembly, component of the UV-DDB complex which includes DDB1 and DDB2; the heterodimer dimerizes to give rise to a heterotetramer when bound to damaged DNA. The UV-DDB complex interacts with monoubiquitinated histone H2A and binds to XPC via the DDB2 subunit. Component of numerous DCX (DDB1-CUL4-X-box) E3 ubiquitin-protein ligase complexes which consist of a core of DDB1, CUL4A or CUL4B and RBX1. DDB1 may recruit specific substrate targeting subunits to the DCX complex. These substrate targeting subunits are generally known as DCAF (DDB1- and CUL4-associated factor) or CDW (CUL4-DDB1-associated WD40-repeat) proteins. Interacts with AMBRA1, ATG16L1, BTRC, CRBN, DCAF1, DCAF4, DCAF5, DCAF6, DCAF7, DCAF8, DCAF9, DCAF10, DCAF11, DCAF12, DCAF15, DCAF16, DCAF17, DDA1, DET1, DTL, ERCC8, FBXW5, FBXW8, GRWD1, KATNB1, NLE1, NUP43, PAFAH1B1, PHIP, PWP1, RBBP4, RBBP5, RBBP7, COP1, SNRNP40, DCAF1, WDR5, WDR5B, WDR12, WDR26, WDR39, WDR42, WDR53, WDR59, WDR61, WSB1, WSB2, LRWD1 and WDTC1. DCX complexes may associate with the COP9 signalosome, and this inhibits the E3 ubiquitin-protein ligase activity of the complex. Interacts with NF2, TSC1 and TSC2. Interacts with AGO1 and AGO2. Associates with the E3 ligase complex containing DYRK2, EDD/UBR5, DDB1 and DCAF1 proteins (EDVP complex). Interacts directly with DYRK2. DCX(DTL) complex interacts with FBXO11; does not ubiquitinate and degradate FBXO11. Interacts with TRPC4AP. Interacts with CRY1 and CRY2. The DDB1-CUL4A complex interacts with CRY1. May also interact with DCUN1D1, DCUN1D2, DCUN1D3 and DCUN1D5. Component of the DCX(DCAF13) E3 ubiquitin ligase complex, at least composed of CUL4 (CUL4A or CUL4B), DDB1, DCAF13 and RBX1. Interacts with DCAF13 (via WD40 domain). Post-translationally, phosphorylated by ABL1. Ubiquitinated by CUL4A. Subsequently degraded by ubiquitin-dependent proteolysis. In terms of processing, acetylated, promoting interaction with CUL4 (CUL4A or CUL4B) and subsequent formation of DCX (DDB1-CUL4-X-box) E3 ubiquitin-protein ligase complexes. Deacetylation by SIRT7 impairs the interaction with CUL4 (CUL4A or CUL4B) and formation of DCX (DDB1-CUL4-X-box) E3 ubiquitin-protein ligase complexes.

Its subcellular location is the cytoplasm. The protein localises to the nucleus. Its pathway is protein modification; protein ubiquitination. Functionally, protein, which is both involved in DNA repair and protein ubiquitination, as part of the UV-DDB complex and DCX (DDB1-CUL4-X-box) complexes, respectively. Core component of the UV-DDB complex (UV-damaged DNA-binding protein complex), a complex that recognizes UV-induced DNA damage and recruit proteins of the nucleotide excision repair pathway (the NER pathway) to initiate DNA repair. The UV-DDB complex preferentially binds to cyclobutane pyrimidine dimers (CPD), 6-4 photoproducts (6-4 PP), apurinic sites and short mismatches. Also functions as a component of numerous distinct DCX (DDB1-CUL4-X-box) E3 ubiquitin-protein ligase complexes which mediate the ubiquitination and subsequent proteasomal degradation of target proteins. The functional specificity of the DCX E3 ubiquitin-protein ligase complex is determined by the variable substrate recognition component recruited by DDB1. DCX(DDB2) (also known as DDB1-CUL4-ROC1, CUL4-DDB-ROC1 and CUL4-DDB-RBX1) may ubiquitinate histone H2A, histone H3 and histone H4 at sites of UV-induced DNA damage. The ubiquitination of histones may facilitate their removal from the nucleosome and promote subsequent DNA repair. DCX(DDB2) also ubiquitinates XPC, which may enhance DNA-binding by XPC and promote NER. DCX(DTL) plays a role in PCNA-dependent polyubiquitination of CDT1 and MDM2-dependent ubiquitination of TP53 in response to radiation-induced DNA damage and during DNA replication. DCX(ERCC8) (the CSA complex) plays a role in transcription-coupled repair (TCR). The DDB1-CUL4A-DTL E3 ligase complex regulates the circadian clock function by mediating the ubiquitination and degradation of CRY1. DDB1-mediated CRY1 degradation promotes FOXO1 protein stability and FOXO1-mediated gluconeogenesis in the liver. By acting on TET dioxygenses, essential for oocyte maintenance at the primordial follicle stage, hence essential for female fertility. Maternal factor required for proper zygotic genome activation and genome reprogramming. This Rattus norvegicus (Rat) protein is DNA damage-binding protein 1 (Ddb1).